The following is a 230-amino-acid chain: 3,4-dihydroxy-2-butanone 4-phosphate synthase (230 aa).

D-ribulose 5-phosphate contacts are provided by residues 42 to 43 (RE), aspartate 47, 155 to 159 (RRGHT), and glutamate 179. Position 43 (glutamate 43) interacts with Mg(2+). Residue histidine 158 coordinates Mg(2+).

This sequence belongs to the DHBP synthase family. Homodimer. Mg(2+) is required as a cofactor. Mn(2+) serves as cofactor.

The enzyme catalyses D-ribulose 5-phosphate = (2S)-2-hydroxy-3-oxobutyl phosphate + formate + H(+). Its pathway is cofactor biosynthesis; riboflavin biosynthesis; 2-hydroxy-3-oxobutyl phosphate from D-ribulose 5-phosphate: step 1/1. In terms of biological role, catalyzes the conversion of D-ribulose 5-phosphate to formate and 3,4-dihydroxy-2-butanone 4-phosphate. The polypeptide is 3,4-dihydroxy-2-butanone 4-phosphate synthase (Bordetella pertussis (strain Tohama I / ATCC BAA-589 / NCTC 13251)).